Reading from the N-terminus, the 282-residue chain is Probable endonuclease 4 (282 aa).

Residues H66, H106, E143, D176, H179, H213, D226, H228, and E258 each contribute to the Zn(2+) site.

The protein belongs to the AP endonuclease 2 family. Zn(2+) is required as a cofactor.

The enzyme catalyses Endonucleolytic cleavage to 5'-phosphooligonucleotide end-products.. In terms of biological role, endonuclease IV plays a role in DNA repair. It cleaves phosphodiester bonds at apurinic or apyrimidinic (AP) sites, generating a 3'-hydroxyl group and a 5'-terminal sugar phosphate. This is Probable endonuclease 4 from Aquifex aeolicus (strain VF5).